The following is a 52-amino-acid chain: ATP synthase protein 8 (52 aa).

The chain crosses the membrane as a helical span at residues 6-26; sequence PINGFVILCSISLMLLTLLIN.

It belongs to the ATPase protein 8 family. As to quaternary structure, F-type ATPases have 2 components, CF(1) - the catalytic core - and CF(0) - the membrane proton channel.

The protein localises to the mitochondrion membrane. Functionally, mitochondrial membrane ATP synthase (F(1)F(0) ATP synthase or Complex V) produces ATP from ADP in the presence of a proton gradient across the membrane which is generated by electron transport complexes of the respiratory chain. F-type ATPases consist of two structural domains, F(1) - containing the extramembraneous catalytic core and F(0) - containing the membrane proton channel, linked together by a central stalk and a peripheral stalk. During catalysis, ATP synthesis in the catalytic domain of F(1) is coupled via a rotary mechanism of the central stalk subunits to proton translocation. Part of the complex F(0) domain. Minor subunit located with subunit a in the membrane. The protein is ATP synthase protein 8 (MT-ATP8) of Albinaria turrita (Door snail).